The sequence spans 445 residues: MIKIKRGLDLPISGAPEQRIEAARPVRSVALIGFDYHGMKPTMAVQVGDRVKLGQVLFTDKKNPSVSYTAPGAGVVSAIHRGEKRVLQSVVIDLDGDEQLEFARYPADKLATLSAEQVRDNLLQSGLWTALRTRPFSKVPDPESSPSSIFVTAIDTQPLAADPQVVIAEQGEAFQAGLTVLGRLARVFLCKAEGVSLPGEALSGVTAQAFSGPHPAGLPGTHIHFLDPVGAGKSVWNLNYQDVIAIGKLFTTGQLWTERVIALAGPVVEKPRLVRTRLGANLDELAAGQLQPGNNRLISGSVLGGRTAHGAYAYLGRYHLQLSCLKEGDQREFLHYLRAGVEKHSLLNVFVSRLLGGKRFAFTTSTNGSPRAMVPVGNYEAVMPLDILPTQLLRYLIVGDTEMAQKLGALELDEEDLALCSYVCAGKYEYGPILRDNLARIEQEG.

This sequence belongs to the NqrA family. As to quaternary structure, composed of six subunits; NqrA, NqrB, NqrC, NqrD, NqrE and NqrF.

The catalysed reaction is a ubiquinone + n Na(+)(in) + NADH + H(+) = a ubiquinol + n Na(+)(out) + NAD(+). Its function is as follows. NQR complex catalyzes the reduction of ubiquinone-1 to ubiquinol by two successive reactions, coupled with the transport of Na(+) ions from the cytoplasm to the periplasm. NqrA to NqrE are probably involved in the second step, the conversion of ubisemiquinone to ubiquinol. This is Na(+)-translocating NADH-quinone reductase subunit A from Pseudomonas aeruginosa (strain ATCC 15692 / DSM 22644 / CIP 104116 / JCM 14847 / LMG 12228 / 1C / PRS 101 / PAO1).